Consider the following 145-residue polypeptide: MRLNTLSPAAGSKRVKHRPGRGIGSGLGKTGGRGVKGQTSRSGGGKVRNGFEGGQMPLKIRLPKFGFFSRKSLVSAEVRLNEIALVEGDVVDVSTLKQAGVITKNIVFAKVVLSGNIDRAVTVRGLSVTKGARAAIEAAGGKIEE.

A disordered region spans residues 1–52 (MRLNTLSPAAGSKRVKHRPGRGIGSGLGKTGGRGVKGQTSRSGGGKVRNGFE). Composition is skewed to gly residues over residues 21 to 35 (RGIGSGLGKTGGRGV) and 42 to 52 (SGGGKVRNGFE).

Belongs to the universal ribosomal protein uL15 family. In terms of assembly, part of the 50S ribosomal subunit.

In terms of biological role, binds to the 23S rRNA. This is Large ribosomal subunit protein uL15 from Aeromonas hydrophila subsp. hydrophila (strain ATCC 7966 / DSM 30187 / BCRC 13018 / CCUG 14551 / JCM 1027 / KCTC 2358 / NCIMB 9240 / NCTC 8049).